The chain runs to 286 residues: Thymidylate synthase (286 aa).

Arginine 21 provides a ligand contact to dUMP. Asparagine 51 contacts (6R)-5,10-methylene-5,6,7,8-tetrahydrofolate. 150 to 151 (RR) contacts dUMP. Cysteine 170 serves as the catalytic Nucleophile. Residues 190–193 (RSAD), asparagine 201, and 231–233 (HIY) each bind dUMP. Aspartate 193 contributes to the (6R)-5,10-methylene-5,6,7,8-tetrahydrofolate binding site. Alanine 285 serves as a coordination point for (6R)-5,10-methylene-5,6,7,8-tetrahydrofolate.

Belongs to the thymidylate synthase family. Bacterial-type ThyA subfamily. As to quaternary structure, homodimer.

The protein resides in the cytoplasm. It catalyses the reaction dUMP + (6R)-5,10-methylene-5,6,7,8-tetrahydrofolate = 7,8-dihydrofolate + dTMP. The protein operates within pyrimidine metabolism; dTTP biosynthesis. Functionally, catalyzes the reductive methylation of 2'-deoxyuridine-5'-monophosphate (dUMP) to 2'-deoxythymidine-5'-monophosphate (dTMP) while utilizing 5,10-methylenetetrahydrofolate (mTHF) as the methyl donor and reductant in the reaction, yielding dihydrofolate (DHF) as a by-product. This enzymatic reaction provides an intracellular de novo source of dTMP, an essential precursor for DNA biosynthesis. This is Thymidylate synthase from Mycoplasmopsis pulmonis (strain UAB CTIP) (Mycoplasma pulmonis).